Reading from the N-terminus, the 250-residue chain is Virulence plasmid protein pGP6-D-related protein (250 aa).

This sequence belongs to the UPF0137 (pGP6-D) family.

The sequence is that of Virulence plasmid protein pGP6-D-related protein from Chlamydia pneumoniae (Chlamydophila pneumoniae).